Consider the following 262-residue polypeptide: Adenosylcobinamide-GDP ribazoletransferase (262 aa).

A run of 6 helical transmembrane segments spans residues 43-63, 66-86, 120-140, 146-166, 191-211, and 242-262; these read YFGL…WLTQ, LPAG…TGGF, GALA…ELAL, AGSA…SIIF, LLIL…LAAL, and AAQQ…GNIL.

Belongs to the CobS family. Mg(2+) is required as a cofactor.

It localises to the cell inner membrane. The enzyme catalyses alpha-ribazole + adenosylcob(III)inamide-GDP = adenosylcob(III)alamin + GMP + H(+). It catalyses the reaction alpha-ribazole 5'-phosphate + adenosylcob(III)inamide-GDP = adenosylcob(III)alamin 5'-phosphate + GMP + H(+). The protein operates within cofactor biosynthesis; adenosylcobalamin biosynthesis; adenosylcobalamin from cob(II)yrinate a,c-diamide: step 7/7. Joins adenosylcobinamide-GDP and alpha-ribazole to generate adenosylcobalamin (Ado-cobalamin). Also synthesizes adenosylcobalamin 5'-phosphate from adenosylcobinamide-GDP and alpha-ribazole 5'-phosphate. The protein is Adenosylcobinamide-GDP ribazoletransferase of Shewanella baltica (strain OS185).